Here is an 881-residue protein sequence, read N- to C-terminus: Plakophilin-2 (881 aa).

The required for interaction with influenza A virus RNA polymerase subunit PB1 stretch occupies residues 1 to 348 (MAAPGAPAEY…FTDSQLGNAD (348 aa)). The tract at residues 1 to 360 (MAAPGAPAEY…MTLERAVSML (360 aa)) is required for binding to single-stranded DNA. Residue S44 is modified to Phosphoserine. The residue at position 46 (R46) is an Omega-N-methylarginine. A Phosphoserine; by MARK3 modification is found at S82. Phosphoserine is present on residues S132, S135, S151, S154, S155, S169, and S172. A Phosphothreonine modification is found at T177. A phosphoserine mark is found at S183, S197, S251, S294, and S329. The interval 282-314 (QNRASRSSWHQSSFHSTRTLREAGPSVAVDSSG) is disordered. Residues 286–297 (SRSSWHQSSFHS) are compositionally biased toward low complexity. ARM repeat units lie at residues 341–383 (DSQL…ECFQ), 385–424 (SEARKRVNQLRGILKLLQLLKVQNEDVQRAVCGALRNLVF), 427–467 (NDNK…NLRS), 571–616 (DGRK…NLSY), 671–711 (PKGV…NLTA), 719–758 (SVAQTVVQKESGLQHTRKMLHVGDPSVKKTAISLLRNLSR), 763–804 (QNEI…NIIQ), and 807–849 (YQNA…SLWA).

This sequence belongs to the beta-catenin family. Interacts with DSC2. Interacts with JUP. Interacts with KRT5/CK5, KRT8/CK8, KRT14/CK14, KRT18/CK18 and VIM. Interacts (via N-terminus) with MARK3/C-TAK1. Interacts with DSP. Interacts with DSG1, DSG2 and DSG3. Interacts (via N-terminus) with CTNNB1. Interacts with CDH1. Interacts with the RNA polymerase III (Pol III) complex proteins POLR3A/RPC155, POLR3F/RPC39 and POLR3C/RPC82. Interacts with CTNNA3. Interacts (via N-terminus) with SCN5A/Nav1.5. Interacts with ANK3/ANKG and GJA1/CX43. As to quaternary structure, (Microbial infection) Interacts (via N-terminus) with influenza A virus RNA polymerase subunit PB1 (via C-terminus); the interaction competitively inhibits the interaction between the subunits PB1 and PB2. Expressed at intercalated disks in the heart (at protein level). Expressed in gingival epithelial, endothelial and fibroblast cells (at protein level). Faintly expressed in tracheal epithelial cells (at protein level). Widely expressed. Found at desmosomal plaques in simple and stratified epithelia and in non-epithelial tissues such as myocardium and lymph node follicles. In most stratified epithelia found in the desmosomes of the basal cell layer and seems to be absent from suprabasal strata. As to expression, (Microbial infection) Abundantly expressed in tracheal epithelial cells following influenza A virus infection (at protein level).

The protein localises to the nucleus. Its subcellular location is the cell junction. It localises to the desmosome. It is found in the cytoplasm. In terms of biological role, a component of desmosome cell-cell junctions which are required for positive regulation of cellular adhesion. Regulates focal adhesion turnover resulting in changes in focal adhesion size, cell adhesion and cell spreading, potentially via transcriptional modulation of beta-integrins. Required to maintain gingival epithelial barrier function. Important component of the desmosome that is also required for localization of desmosome component proteins such as DSC2, DSG2 and JUP to the desmosome cell-cell junction. Required for the formation of desmosome cell junctions in cardiomyocytes, thereby required for the correct formation of the heart, specifically trabeculation and formation of the atria walls. Loss of desmosome cell junctions leads to mis-localization of DSP and DSG2 resulting in disruption of cell-cell adhesion and disordered intermediate filaments. Modulates profibrotic gene expression in cardiomyocytes via regulation of DSP expression and subsequent activation of downstream TGFB1 and MAPK14/p38 MAPK signaling. Required for cardiac sodium current propagation and electrical synchrony in cardiac myocytes, via ANK3 stabilization and modulation of SCN5A/Nav1.5 localization to cell-cell junctions. Required for mitochondrial function, nuclear envelope integrity and positive regulation of SIRT3 transcription via maintaining DES localization at its nuclear envelope and cell tip anchoring points, and thereby preserving regulation of the transcriptional program. Maintenance of nuclear envelope integrity protects against DNA damage and transcriptional dysregulation of genes, especially those involved in the electron transport chain, thereby preserving mitochondrial function and protecting against superoxide radical anion generation. Binds single-stranded DNA (ssDNA). May regulate the localization of GJA1 to gap junctions in intercalated disks of the heart. Involved in the inhibition of viral infection by influenza A viruses (IAV). Acts as a host restriction factor for IAV viral propagation, potentially via disrupting the interaction of IAV polymerase complex proteins. This Homo sapiens (Human) protein is Plakophilin-2.